We begin with the raw amino-acid sequence, 352 residues long: Chorismate synthase (352 aa).

Arg48 contributes to the NADP(+) binding site. FMN is bound by residues 125 to 127, 238 to 239, Gly278, 293 to 297, and Arg319; these read RSS, NA, and KPTSS.

Belongs to the chorismate synthase family. As to quaternary structure, homotetramer. FMNH2 serves as cofactor.

The catalysed reaction is 5-O-(1-carboxyvinyl)-3-phosphoshikimate = chorismate + phosphate. Its pathway is metabolic intermediate biosynthesis; chorismate biosynthesis; chorismate from D-erythrose 4-phosphate and phosphoenolpyruvate: step 7/7. In terms of biological role, catalyzes the anti-1,4-elimination of the C-3 phosphate and the C-6 proR hydrogen from 5-enolpyruvylshikimate-3-phosphate (EPSP) to yield chorismate, which is the branch point compound that serves as the starting substrate for the three terminal pathways of aromatic amino acid biosynthesis. This reaction introduces a second double bond into the aromatic ring system. The chain is Chorismate synthase from Legionella pneumophila subsp. pneumophila (strain Philadelphia 1 / ATCC 33152 / DSM 7513).